The primary structure comprises 138 residues: Transmembrane protein 170A (138 aa).

The Lumenal segment spans residues 1 to 44; it reads MEGSEAGGGGLLQQILSLRLVPRVGNGTTYSSPLSTFPEMWYGV. The N-linked (GlcNAc...) asparagine glycan is linked to asparagine 26. A helical transmembrane segment spans residues 45-65; it reads FLWALVSSLSFHVPAALLALF. At 66 to 79 the chain is on the cytoplasmic side; sequence TLRHHKYGRFMSVS. A helical membrane pass occupies residues 80–100; that stretch reads LLLMGIVGPITAGILTSAAIA. The Lumenal portion of the chain corresponds to 101 to 110; that stretch reads GVYRAAGKKM. A helical transmembrane segment spans residues 111-131; that stretch reads IPFEALIFEVGQTFCVVVVSF. The Cytoplasmic segment spans residues 132-138; sequence LRILATL.

It belongs to the TMEM170 family.

The protein resides in the endoplasmic reticulum membrane. Its subcellular location is the nucleus envelope. May regulate membrane morphogenesis in the endoplasmic reticulum (ER) by promoting ER sheet formation at the expense of ER tubules. This is Transmembrane protein 170A (TMEM170A) from Gallus gallus (Chicken).